The following is a 51-amino-acid chain: Mating pheromone Er-23 (51 aa).

Cystine bridges form between cysteine 3-cysteine 24, cysteine 6-cysteine 16, cysteine 13-cysteine 47, cysteine 27-cysteine 40, and cysteine 35-cysteine 51.

Its subcellular location is the secreted. Its function is as follows. Mating ciliate pheromones (or gamones) are diffusible extracellular communication signals that distinguish different intraspecific classes of cells commonly referred to as 'mating types'. They prepare the latter for conjugation by changing their cell surface properties. In Euplotes raikovi, this protein is Mating pheromone Er-23 (MAT23).